Reading from the N-terminus, the 75-residue chain is Cytochrome c oxidase subunit 6C (75 aa).

The Mitochondrial matrix segment spans residues M1–G13. A helical transmembrane segment spans residues L14–R54. Residues N55–K75 are Mitochondrial intermembrane-facing.

This sequence belongs to the cytochrome c oxidase subunit 6c family. In terms of assembly, component of the cytochrome c oxidase (complex IV, CIV), a multisubunit enzyme composed of 14 subunits. The complex is composed of a catalytic core of 3 subunits MT-CO1, MT-CO2 and MT-CO3, encoded in the mitochondrial DNA, and 11 supernumerary subunits COX4I, COX5A, COX5B, COX6A, COX6B, COX6C, COX7A, COX7B, COX7C, COX8 and NDUFA4, which are encoded in the nuclear genome. The complex exists as a monomer or a dimer and forms supercomplexes (SCs) in the inner mitochondrial membrane with NADH-ubiquinone oxidoreductase (complex I, CI) and ubiquinol-cytochrome c oxidoreductase (cytochrome b-c1 complex, complex III, CIII), resulting in different assemblies (supercomplex SCI(1)III(2)IV(1) and megacomplex MCI(2)III(2)IV(2)).

It is found in the mitochondrion inner membrane. The protein operates within energy metabolism; oxidative phosphorylation. Its function is as follows. Component of the cytochrome c oxidase, the last enzyme in the mitochondrial electron transport chain which drives oxidative phosphorylation. The respiratory chain contains 3 multisubunit complexes succinate dehydrogenase (complex II, CII), ubiquinol-cytochrome c oxidoreductase (cytochrome b-c1 complex, complex III, CIII) and cytochrome c oxidase (complex IV, CIV), that cooperate to transfer electrons derived from NADH and succinate to molecular oxygen, creating an electrochemical gradient over the inner membrane that drives transmembrane transport and the ATP synthase. Cytochrome c oxidase is the component of the respiratory chain that catalyzes the reduction of oxygen to water. Electrons originating from reduced cytochrome c in the intermembrane space (IMS) are transferred via the dinuclear copper A center (CU(A)) of subunit 2 and heme A of subunit 1 to the active site in subunit 1, a binuclear center (BNC) formed by heme A3 and copper B (CU(B)). The BNC reduces molecular oxygen to 2 water molecules using 4 electrons from cytochrome c in the IMS and 4 protons from the mitochondrial matrix. This is Cytochrome c oxidase subunit 6C (COX6C) from Trachypithecus cristatus (Silvered leaf-monkey).